Consider the following 196-residue polypeptide: Pyridoxine/pyridoxamine 5'-phosphate oxidase (196 aa).

Residues 46-51 (RNVLYK), 61-62 (FT), R67, K68, and Q90 each bind FMN. K51 is a substrate binding site. Positions 108, 112, and 116 each coordinate substrate. FMN-binding positions include 125–126 (QS) and W169. 175–177 (RLH) is a substrate binding site. R179 lines the FMN pocket.

Belongs to the pyridoxamine 5'-phosphate oxidase family. In terms of assembly, homodimer. The cofactor is FMN.

It carries out the reaction pyridoxamine 5'-phosphate + O2 + H2O = pyridoxal 5'-phosphate + H2O2 + NH4(+). The enzyme catalyses pyridoxine 5'-phosphate + O2 = pyridoxal 5'-phosphate + H2O2. It functions in the pathway cofactor metabolism; pyridoxal 5'-phosphate salvage; pyridoxal 5'-phosphate from pyridoxamine 5'-phosphate: step 1/1. The protein operates within cofactor metabolism; pyridoxal 5'-phosphate salvage; pyridoxal 5'-phosphate from pyridoxine 5'-phosphate: step 1/1. Functionally, catalyzes the oxidation of either pyridoxine 5'-phosphate (PNP) or pyridoxamine 5'-phosphate (PMP) into pyridoxal 5'-phosphate (PLP). The protein is Pyridoxine/pyridoxamine 5'-phosphate oxidase of Coxiella burnetii (strain RSA 493 / Nine Mile phase I).